We begin with the raw amino-acid sequence, 353 residues long: tRNA N6-adenosine threonylcarbamoyltransferase (353 aa).

Fe cation is bound by residues H109 and H113. Substrate is bound by residues 136 to 140, D169, G182, D186, and N284; that span reads TVSGG. D312 lines the Fe cation pocket.

The protein belongs to the KAE1 / TsaD family. Fe(2+) serves as cofactor.

The protein localises to the cytoplasm. It carries out the reaction L-threonylcarbamoyladenylate + adenosine(37) in tRNA = N(6)-L-threonylcarbamoyladenosine(37) in tRNA + AMP + H(+). Its function is as follows. Required for the formation of a threonylcarbamoyl group on adenosine at position 37 (t(6)A37) in tRNAs that read codons beginning with adenine. Is involved in the transfer of the threonylcarbamoyl moiety of threonylcarbamoyl-AMP (TC-AMP) to the N6 group of A37, together with TsaE and TsaB. TsaD likely plays a direct catalytic role in this reaction. The chain is tRNA N6-adenosine threonylcarbamoyltransferase from Chlorobaculum tepidum (strain ATCC 49652 / DSM 12025 / NBRC 103806 / TLS) (Chlorobium tepidum).